Consider the following 725-residue polypeptide: Protein ECM27 (725 aa).

Helical transmembrane passes span 21–41 (VTFI…LGIC), 119–139 (VLGA…IIMS), 157–177 (LLFS…NQVT), 178–198 (VLNC…KLTF), 397–417 (ISDA…KLSC), 439–459 (LPII…CSIL), 470–490 (LVYL…TAFI), 526–546 (IQII…SLLA), 559–579 (ILGL…NSVG), 621–641 (LNSM…IGAF), 668–688 (FIVS…FFGG), and 704–724 (GISM…LELF).

It belongs to the Ca(2+):cation antiporter (CaCA) (TC 2.A.19) family.

The protein resides in the membrane. This is Protein ECM27 (ECM27) from Saccharomyces cerevisiae (strain ATCC 204508 / S288c) (Baker's yeast).